Reading from the N-terminus, the 159-residue chain is 2-C-methyl-D-erythritol 2,4-cyclodiphosphate synthase (159 aa).

Positions 10 and 12 each coordinate a divalent metal cation. 4-CDP-2-C-methyl-D-erythritol 2-phosphate-binding positions include 10–12 (DVH) and 36–37 (HS). His44 contributes to the a divalent metal cation binding site. 4-CDP-2-C-methyl-D-erythritol 2-phosphate contacts are provided by residues 58–60 (DIG) and Arg144.

This sequence belongs to the IspF family. In terms of assembly, homotrimer. A divalent metal cation is required as a cofactor.

The enzyme catalyses 4-CDP-2-C-methyl-D-erythritol 2-phosphate = 2-C-methyl-D-erythritol 2,4-cyclic diphosphate + CMP. It functions in the pathway isoprenoid biosynthesis; isopentenyl diphosphate biosynthesis via DXP pathway; isopentenyl diphosphate from 1-deoxy-D-xylulose 5-phosphate: step 4/6. Functionally, involved in the biosynthesis of isopentenyl diphosphate (IPP) and dimethylallyl diphosphate (DMAPP), two major building blocks of isoprenoid compounds. Catalyzes the conversion of 4-diphosphocytidyl-2-C-methyl-D-erythritol 2-phosphate (CDP-ME2P) to 2-C-methyl-D-erythritol 2,4-cyclodiphosphate (ME-CPP) with a corresponding release of cytidine 5-monophosphate (CMP). The sequence is that of 2-C-methyl-D-erythritol 2,4-cyclodiphosphate synthase from Paraburkholderia phymatum (strain DSM 17167 / CIP 108236 / LMG 21445 / STM815) (Burkholderia phymatum).